Consider the following 131-residue polypeptide: Large ribosomal subunit protein bL12 (131 aa).

The protein belongs to the bacterial ribosomal protein bL12 family. In terms of assembly, homodimer. Part of the ribosomal stalk of the 50S ribosomal subunit. Forms a multimeric L10(L12)X complex, where L10 forms an elongated spine to which 2 to 4 L12 dimers bind in a sequential fashion. Binds GTP-bound translation factors.

Forms part of the ribosomal stalk which helps the ribosome interact with GTP-bound translation factors. Is thus essential for accurate translation. The sequence is that of Large ribosomal subunit protein bL12 from Prochlorococcus marinus (strain MIT 9313).